The chain runs to 416 residues: Tyrosine--tRNA ligase (416 aa).

Y40 contributes to the L-tyrosine binding site. The 'HIGH' region motif lies at 45–54 (ATAASLHVGH). The L-tyrosine site is built by Y177 and Q181. A 'KMSKS' region motif is present at residues 237–241 (KMGKS). K240 contacts ATP. Residues 351 to 416 (LSVAHFLVAA…RKKHKLVRLS (66 aa)) form the S4 RNA-binding domain.

Belongs to the class-I aminoacyl-tRNA synthetase family. TyrS type 1 subfamily. Homodimer.

It localises to the cytoplasm. The catalysed reaction is tRNA(Tyr) + L-tyrosine + ATP = L-tyrosyl-tRNA(Tyr) + AMP + diphosphate + H(+). Catalyzes the attachment of tyrosine to tRNA(Tyr) in a two-step reaction: tyrosine is first activated by ATP to form Tyr-AMP and then transferred to the acceptor end of tRNA(Tyr). In Cereibacter sphaeroides (strain ATCC 17029 / ATH 2.4.9) (Rhodobacter sphaeroides), this protein is Tyrosine--tRNA ligase.